A 295-amino-acid chain; its full sequence is Replication-associated protein A (295 aa).

The disordered stretch occupies residues 1-31 (MSSLPVSESEGEGSGTSVQVPSRGGQVTPGE). One can recognise a CRESS-DNA virus Rep endonuclease domain in the interval 35–138 (SLRTKHVFLT…PESSWEFGKF (104 aa)). An RCR-1 motif is present at residues 42–45 (FLTY). A divalent metal cation contacts are provided by glutamate 76, histidine 84, and histidine 86. Residues 84-86 (HLH) carry the RCR-2 motif. The active-site For DNA cleavage activity is the tyrosine 124. An RCR-3 motif is present at residues 124-127 (YCMK). The tract at residues 192 to 204 (SANALFPDPPQTY) is oligomerization.

The protein belongs to the geminiviridae Rep protein family. In terms of assembly, homooligomer. Part of the C- and V-complexes which are RepA-Rep-DNA complexes involved in the c-sense and v-sense transcription.

It localises to the host nucleus. The protein resides in the host cytoplasm. In terms of biological role, implicated in enhancement of V-sense gene expression. Acts a an inhibitor of C-sense gene transcription. In Avena sativa (Oat), this protein is Replication-associated protein A.